Here is a 130-residue protein sequence, read N- to C-terminus: Ribonuclease pancreatic (130 aa).

The signal sequence occupies residues 1–6 (VQPSLG). Residues Lys-13 and Arg-16 each coordinate substrate. His-18 functions as the Proton acceptor in the catalytic mechanism. Intrachain disulfides connect Cys-32–Cys-90, Cys-46–Cys-101, Cys-64–Cys-116, and Cys-71–Cys-78. N-linked (GlcNAc...) asparagine glycosylation is present at Asn-40. Substrate is bound by residues 47-51 (KPVNT), Lys-72, and Arg-91. Catalysis depends on His-125, which acts as the Proton donor.

The protein belongs to the pancreatic ribonuclease family. As to quaternary structure, monomer. Interacts with and forms tight 1:1 complexes with RNH1. Dimerization of two such complexes may occur. Interaction with RNH1 inhibits this protein. As to expression, pancreas.

The protein localises to the secreted. It catalyses the reaction an [RNA] containing cytidine + H2O = an [RNA]-3'-cytidine-3'-phosphate + a 5'-hydroxy-ribonucleotide-3'-[RNA].. The catalysed reaction is an [RNA] containing uridine + H2O = an [RNA]-3'-uridine-3'-phosphate + a 5'-hydroxy-ribonucleotide-3'-[RNA].. Endonuclease that catalyzes the cleavage of RNA on the 3' side of pyrimidine nucleotides. Acts on single-stranded and double-stranded RNA. The sequence is that of Ribonuclease pancreatic (RNASE1) from Cricetulus griseus (Chinese hamster).